The following is a 700-amino-acid chain: Polyphosphate kinase (700 aa).

ATP is bound at residue N45. Residues R373 and R403 each coordinate Mg(2+). Positions 428–462 constitute a PLD phosphodiesterase 1 domain; that stretch reads PGMKIHAKLLLITRREEQGFVRYAHIGTGNFHERT. Catalysis depends on H433, which acts as the Phosphohistidine intermediate. 3 residues coordinate ATP: Y466, R562, and H590. The region spanning 585–615 is the PLD phosphodiesterase 2 domain; that stretch reads DRFLEHPRVLVVHNDGDPQVFISSADWMERN.

The protein belongs to the polyphosphate kinase 1 (PPK1) family. It depends on Mg(2+) as a cofactor. Post-translationally, an intermediate of this reaction is the autophosphorylated ppk in which a phosphate is covalently linked to a histidine residue through a N-P bond.

The enzyme catalyses [phosphate](n) + ATP = [phosphate](n+1) + ADP. Its function is as follows. Catalyzes the reversible transfer of the terminal phosphate of ATP to form a long-chain polyphosphate (polyP). The chain is Polyphosphate kinase from Vibrio vulnificus (strain CMCP6).